Reading from the N-terminus, the 363-residue chain is Cytoskeleton protein RodZ (363 aa).

Over 1-111 (MNTEASQDQT…LGKKHKKRDG (111 aa)) the chain is Cytoplasmic. The 61-residue stretch at 19 to 79 (LRQARESLGL…KLVHLPEDEL (61 aa)) folds into the HTH cro/C1-type domain. Residues 30-49 (QQTVAERLCLKVSTIRDIEE) constitute a DNA-binding region (H-T-H motif). Residues 112–132 (WLMSFTWLIVLVVLGLTGAWW) traverse the membrane as a helical; Signal-anchor for type II membrane protein segment. At 133-363 (WQNHQAQQAE…RVARLTVGVE (231 aa)) the chain is on the periplasmic side. The tract at residues 151 to 277 (SAQLSQNGGQ…PLPTADAGVS (127 aa)) is disordered. The span at 188 to 199 (PLTNHSVSAITN) shows a compositional bias: polar residues. Low complexity predominate over residues 200–225 (SAPTTSSVPTTSSATTSSVPTTSSVP). Residues 226 to 243 (KINSTEPVDTANTNTTMH) are compositionally biased toward polar residues. Over residues 247–259 (AASAAVSPSQVPQ) the composition is skewed to low complexity.

It belongs to the RodZ family.

It is found in the cell inner membrane. Functionally, cytoskeletal protein that is involved in cell-shape control through regulation of the length of the long axis. This chain is Cytoskeleton protein RodZ, found in Yersinia pseudotuberculosis serotype O:1b (strain IP 31758).